Consider the following 115-residue polypeptide: Guanylin (115 aa).

An N-terminal signal peptide occupies residues 1 to 21 (MNAFLLSALCLLGAWAALAGG). 3 disulfides stabilise this stretch: C69/C82, C104/C112, and C107/C115.

The protein belongs to the guanylin family. Highly expressed in ileum and colon. Found in plasma.

The protein localises to the secreted. Its function is as follows. Endogenous activator of intestinal guanylate cyclase. It stimulates this enzyme through the same receptor binding region as the heat-stable enterotoxins. The chain is Guanylin (GUCA2A) from Homo sapiens (Human).